A 673-amino-acid polypeptide reads, in one-letter code: DNA ligase (673 aa).

Residues 33-37 (DAEYD), 82-83 (SL), and Glu115 contribute to the NAD(+) site. The active-site N6-AMP-lysine intermediate is Lys117. Residues Arg138, Glu175, Lys292, and Lys316 each contribute to the NAD(+) site. Positions 410, 413, 428, and 434 each coordinate Zn(2+). Residues 593-673 (VGDNPFKEKT…TFLAWSKPYL (81 aa)) enclose the BRCT domain.

Belongs to the NAD-dependent DNA ligase family. LigA subfamily. Requires Mg(2+) as cofactor. Mn(2+) is required as a cofactor.

It catalyses the reaction NAD(+) + (deoxyribonucleotide)n-3'-hydroxyl + 5'-phospho-(deoxyribonucleotide)m = (deoxyribonucleotide)n+m + AMP + beta-nicotinamide D-nucleotide.. In terms of biological role, DNA ligase that catalyzes the formation of phosphodiester linkages between 5'-phosphoryl and 3'-hydroxyl groups in double-stranded DNA using NAD as a coenzyme and as the energy source for the reaction. It is essential for DNA replication and repair of damaged DNA. The chain is DNA ligase from Pasteurella multocida (strain Pm70).